Here is a 372-residue protein sequence, read N- to C-terminus: Alpha-parvin (372 aa).

A compositionally biased stretch (low complexity) spans 1–11; it reads MATSPQKSPSV. The interval 1-44 is disordered; that stretch reads MATSPQKSPSVPKSPTPKSPPSRKKDDSFLGKLGGTLARRKKAK. Ala-2 bears the N-acetylalanine mark. Residues Ser-8, Ser-14, and Ser-19 each carry the phosphoserine modification. The segment at 21 to 25 is interaction with ARHGAP31; sequence PSRKK. Residues Ser-28 and Ser-62 each carry the phosphoserine modification. Calponin-homology (CH) domains follow at residues 95–202 and 262–369; these read QELM…QYFR and NVVK…TKYR. The interval 223–372 is required for interaction with TESK1 and ILK; that stretch reads GILQSRQIQE…NLFTKYRNVE (150 aa).

It belongs to the parvin family. As to quaternary structure, component of the heterotrimeric IPP (ILK-PINCH-PARVIN) complex composed of ILK, LIMS1/PINCH and PARVA; the complex binds to F-actin via the C-terminal tail of LIMS1 and the N-terminal region of PARVA, promoting F-actin filament bundling. Interacts with TGFB1I1. Interacts with ARHGAP31. Interacts with the actin cytoskeleton. Interacts (via C-terminus) with TESK1 (via C-terminus); the interaction inhibits TESK1 kinase activity. Interacts with PXN/PAXILLIN (via LD motif 4). In terms of tissue distribution, widely expressed.

It is found in the cell junction. The protein localises to the focal adhesion. It localises to the cell membrane. Its subcellular location is the cytoplasm. The protein resides in the cytoskeleton. It is found in the myofibril. The protein localises to the sarcomere. It localises to the z line. Its function is as follows. Plays a role in sarcomere organization and in smooth muscle cell contraction. Required for normal development of the embryonic cardiovascular system, and for normal septation of the heart outflow tract. Plays a role in sprouting angiogenesis and is required for normal adhesion of vascular smooth muscle cells to endothelial cells during blood vessel development. Plays a role in the reorganization of the actin cytoskeleton, formation of lamellipodia and ciliogenesis. Plays a role in the establishment of cell polarity, cell adhesion, cell spreading, and directed cell migration. Within the IPP (ILK-PINCH-PARVIN) complex, binds to F-actin, promoting F-actin bundling, a process required to generate force for actin cytoskeleton reorganization and subsequent dynamic cell adhesion events such as cell spreading and migration. This chain is Alpha-parvin (Parva), found in Rattus norvegicus (Rat).